The following is an 83-amino-acid chain: UPF0297 protein DSY2420 (83 aa).

The protein belongs to the UPF0297 family.

The protein is UPF0297 protein DSY2420 of Desulfitobacterium hafniense (strain Y51).